We begin with the raw amino-acid sequence, 323 residues long: tRNA-dihydrouridine(16) synthase (323 aa).

Residues 7-9 (PME) and Q68 each bind FMN. C98 functions as the Proton donor in the catalytic mechanism. FMN is bound by residues K139, 200 to 202 (NGE), and 224 to 225 (CR).

It belongs to the Dus family. DusC subfamily. FMN serves as cofactor.

It catalyses the reaction 5,6-dihydrouridine(16) in tRNA + NADP(+) = uridine(16) in tRNA + NADPH + H(+). It carries out the reaction 5,6-dihydrouridine(16) in tRNA + NAD(+) = uridine(16) in tRNA + NADH + H(+). Its function is as follows. Catalyzes the synthesis of 5,6-dihydrouridine (D), a modified base found in the D-loop of most tRNAs, via the reduction of the C5-C6 double bond in target uridines. Specifically modifies U16 in tRNAs. The polypeptide is tRNA-dihydrouridine(16) synthase (Vibrio cholerae serotype O1 (strain ATCC 39315 / El Tor Inaba N16961)).